We begin with the raw amino-acid sequence, 258 residues long: Imidazole glycerol phosphate synthase subunit HisF (258 aa).

Residues Asp-11 and Asp-130 contribute to the active site.

Belongs to the HisA/HisF family. As to quaternary structure, heterodimer of HisH and HisF.

It is found in the cytoplasm. The catalysed reaction is 5-[(5-phospho-1-deoxy-D-ribulos-1-ylimino)methylamino]-1-(5-phospho-beta-D-ribosyl)imidazole-4-carboxamide + L-glutamine = D-erythro-1-(imidazol-4-yl)glycerol 3-phosphate + 5-amino-1-(5-phospho-beta-D-ribosyl)imidazole-4-carboxamide + L-glutamate + H(+). It participates in amino-acid biosynthesis; L-histidine biosynthesis; L-histidine from 5-phospho-alpha-D-ribose 1-diphosphate: step 5/9. IGPS catalyzes the conversion of PRFAR and glutamine to IGP, AICAR and glutamate. The HisF subunit catalyzes the cyclization activity that produces IGP and AICAR from PRFAR using the ammonia provided by the HisH subunit. The chain is Imidazole glycerol phosphate synthase subunit HisF from Escherichia coli (strain ATCC 8739 / DSM 1576 / NBRC 3972 / NCIMB 8545 / WDCM 00012 / Crooks).